A 271-amino-acid polypeptide reads, in one-letter code: Very long chain fatty acid elongase 3 (271 aa).

A glycan (N-linked (GlcNAc...) asparagine) is linked at Asn6. Transmembrane regions (helical) follow at residues 30-50 (FLEE…LLIV), 67-87 (PLIL…LRMW), 116-136 (FWSF…AFII), 141-161 (PLIF…SFGY), 165-187 (VPSG…TYYT), 199-219 (LPMV…IFGI), and 236-256 (HFFW…HFFH).

This sequence belongs to the ELO family. ELOVL3 subfamily. In terms of assembly, interacts with TECR. In terms of processing, N-Glycosylated. Expressed in brown adipose tissue and liver. In the skin, strong expressed in the cells of the inner layer of the outer root sheath of the hair follicles and in the sebocytes of the sebaceous glands. Hardly detectable in the epidermis and not at all in fibroblasts.

Its subcellular location is the endoplasmic reticulum membrane. It catalyses the reaction a very-long-chain acyl-CoA + malonyl-CoA + H(+) = a very-long-chain 3-oxoacyl-CoA + CO2 + CoA. The enzyme catalyses eicosanoyl-CoA + malonyl-CoA + H(+) = 3-oxodocosanoyl-CoA + CO2 + CoA. It carries out the reaction hexadecanoyl-CoA + malonyl-CoA + H(+) = 3-oxooctadecanoyl-CoA + CO2 + CoA. The catalysed reaction is octadecanoyl-CoA + malonyl-CoA + H(+) = 3-oxoeicosanoyl-CoA + CO2 + CoA. It catalyses the reaction (9Z)-octadecenoyl-CoA + malonyl-CoA + H(+) = 3-oxo-(11Z)-eicosenoyl-CoA + CO2 + CoA. The enzyme catalyses (9Z,12Z)-octadecadienoyl-CoA + malonyl-CoA + H(+) = (11Z,14Z)-3-oxoicosa-11,14-dienoyl-CoA + CO2 + CoA. It carries out the reaction (9Z,12Z,15Z)-octadecatrienoyl-CoA + malonyl-CoA + H(+) = (11Z,14Z,17Z)-3-oxoeicosatrienoyl-CoA + CO2 + CoA. The catalysed reaction is docosanoyl-CoA + malonyl-CoA + H(+) = 3-oxotetracosanoyl-CoA + CO2 + CoA. It catalyses the reaction tetradecanoyl-CoA + malonyl-CoA + H(+) = 3-oxohexadecanoyl-CoA + CO2 + CoA. The protein operates within lipid metabolism; polyunsaturated fatty acid biosynthesis. In terms of biological role, catalyzes the first and rate-limiting reaction of the four reactions that constitute the long-chain fatty acids elongation cycle. This endoplasmic reticulum-bound enzymatic process allows the addition of 2 carbons to the chain of long- and very long-chain fatty acids (VLCFAs) per cycle. Condensing enzyme that exhibits activity toward saturated and unsaturated acyl-CoA substrates with higher activity toward C18 acyl-CoAs, especially C18:0 acyl-CoAs. May participate in the production of saturated and monounsaturated VLCFAs of different chain lengths that are involved in multiple biological processes as precursors of membrane lipids and lipid mediators. Participates in the formation of certain VLCFA and triglycerides in certain cells of the hair follicles and the sebaceous glands, required for skin barrier function. Critical enzyme for lipid accumulation and metabolic activity in brown adipocytes during the early phase of the tissue recruitment. Plays a role in lipid storage and in resistance to diet-induced obesity. This chain is Very long chain fatty acid elongase 3, found in Mus musculus (Mouse).